The sequence spans 663 residues: Innate immunity activator protein (663 aa).

Residues 1 to 68 form a disordered region; sequence MLQMPKLNEI…RLPTQPGPGW (68 aa). The segment covering 40-50 has biased composition (low complexity); it reads RAQGQAGGARA. Residues 118–147 are a coiled coil; that stretch reads AVHKQQRALEARLEACLEELRRLCLREAEL. The Nuclear localization signal (NLS) 1 motif lies at 164–170; it reads PKVRRRI. Disordered regions lie at residues 242-362, 378-425, and 444-493; these read RRRN…ASSL, VPGQ…PRRR, and PLPH…RHRG. The segment covering 259-272 has biased composition (low complexity); it reads ELSASDDSSLSDGL. The span at 282-298 shows a compositional bias: pro residues; it reads PKPPPESPAPPSRPLPP. Over residues 327 to 340 the composition is skewed to basic and acidic residues; it reads TSLDHPYEKPRKSS. The short motif at 332–338 is the Nuclear localization signal (NLS) 2 element; the sequence is PYEKPRK. Polar residues predominate over residues 350–361; sequence ATTPQDGPSASS. Residues 422-428 carry the Nuclear localization signal (NLS) 3 motif; sequence PRRRPTH. The span at 455–475 shows a compositional bias: low complexity; sequence EDSGSDVSSISHPTSPGSSSP.

Interacts with IRAK1, NOD2 and RIPK2; the interaction takes place upon PRR stimulation. Interacts with YWHAQ/14-3-3T; the interaction increases upon PRR stimulation and is required for cellular signaling pathway activation and cytokine secretion. Interacts (via N-terminal domain) with CYTH1 and CYTH2 (via their N-terminal domains). Interacts with FBXW11 and BTRC; associates with SCF E3 ubiquitin-protein ligase complexes. Highly expressed in intestinal myeloid-derived cells and expressed in monocyte-derived macrophages upon induction by PRR activation.

The protein localises to the nucleus. Its subcellular location is the cytoplasm. In terms of biological role, expressed in peripheral macrophages and intestinal myeloid-derived cells, is required for optimal PRR (pattern recognition receptor)-induced signaling, cytokine secretion, and bacterial clearance. Upon stimulation of a broad range of PRRs (pattern recognition receptor) such as NOD2 or TLR2, TLR3, TLR4, TLR5, TLR7 and TLR9, associates with YWHAQ/14-3-3T, which in turn leads to the recruitment and activation of MAP kinases and NF-kappa-B signaling complexes that amplifies PRR-induced downstream signals and cytokine secretion. In the intestine, regulates adherens junction stability by regulating the degradation of CYTH1 and CYTH2, probably acting as substrate cofactor for SCF E3 ubiquitin-protein ligase complexes. Stabilizes adherens junctions by limiting CYTH1-dependent ARF6 activation. The protein is Innate immunity activator protein of Homo sapiens (Human).